The primary structure comprises 413 residues: Serine hydroxymethyltransferase (413 aa).

(6S)-5,6,7,8-tetrahydrofolate-binding positions include L117 and 121–123 (GHL). K226 carries the N6-(pyridoxal phosphate)lysine modification. (6S)-5,6,7,8-tetrahydrofolate-binding positions include E241 and 349–351 (SPF).

The protein belongs to the SHMT family. As to quaternary structure, homodimer. Requires pyridoxal 5'-phosphate as cofactor.

The protein resides in the cytoplasm. The enzyme catalyses (6R)-5,10-methylene-5,6,7,8-tetrahydrofolate + glycine + H2O = (6S)-5,6,7,8-tetrahydrofolate + L-serine. It functions in the pathway one-carbon metabolism; tetrahydrofolate interconversion. Its pathway is amino-acid biosynthesis; glycine biosynthesis; glycine from L-serine: step 1/1. In terms of biological role, catalyzes the reversible interconversion of serine and glycine with tetrahydrofolate (THF) serving as the one-carbon carrier. This reaction serves as the major source of one-carbon groups required for the biosynthesis of purines, thymidylate, methionine, and other important biomolecules. Also exhibits THF-independent aldolase activity toward beta-hydroxyamino acids, producing glycine and aldehydes, via a retro-aldol mechanism. The chain is Serine hydroxymethyltransferase from Halalkalibacterium halodurans (strain ATCC BAA-125 / DSM 18197 / FERM 7344 / JCM 9153 / C-125) (Bacillus halodurans).